The sequence spans 381 residues: Estradiol 17-beta-dehydrogenase 2 (381 aa).

A helical; Signal-anchor for type II membrane protein membrane pass occupies residues 4–24 (FASESAWLCLAAAAVLGGTLL). 83-112 (QKAVLVTGADSGFGHGLAKHLDKLGFTVFA) lines the NAD(+) pocket. Ser-220 is a substrate binding site. Tyr-233 acts as the Proton acceptor in catalysis.

Belongs to the short-chain dehydrogenases/reductases (SDR) family. Homodimer.

The protein localises to the endoplasmic reticulum membrane. The enzyme catalyses 17beta-estradiol + NAD(+) = estrone + NADH + H(+). The catalysed reaction is testosterone + NAD(+) = androst-4-ene-3,17-dione + NADH + H(+). It catalyses the reaction 17beta-hydroxy-5alpha-androstan-3-one + NAD(+) = 5alpha-androstan-3,17-dione + NADH + H(+). It carries out the reaction (20S)-hydroxypregn-4-en-3-one + NAD(+) = progesterone + NADH + H(+). Functionally, catalyzes the NAD-dependent oxidation of highly active 17beta-hydroxysteroids, such as estradiol (E2), testosterone (T), and dihydrotestosterone (DHT), to their less active forms and thus regulates the biological potency of these steroids. Oxidizes estradiol to estrone, testosterone to androstenedione, and dihydrotestosterone to 5alpha-androstan-3,17-dione. Also has 20-alpha-HSD activity. This chain is Estradiol 17-beta-dehydrogenase 2 (Hsd17b2), found in Mus musculus (Mouse).